Reading from the N-terminus, the 491-residue chain is UDP-N-acetylmuramate--L-alanine ligase (491 aa).

Residue 126–132 (GTHGKTT) participates in ATP binding.

It belongs to the MurCDEF family.

Its subcellular location is the cytoplasm. It catalyses the reaction UDP-N-acetyl-alpha-D-muramate + L-alanine + ATP = UDP-N-acetyl-alpha-D-muramoyl-L-alanine + ADP + phosphate + H(+). The protein operates within cell wall biogenesis; peptidoglycan biosynthesis. Cell wall formation. The chain is UDP-N-acetylmuramate--L-alanine ligase from Shigella dysenteriae serotype 1 (strain Sd197).